The following is a 196-amino-acid chain: Large ribosomal subunit protein bL25 (196 aa).

Belongs to the bacterial ribosomal protein bL25 family. CTC subfamily. In terms of assembly, part of the 50S ribosomal subunit; part of the 5S rRNA/L5/L18/L25 subcomplex. Contacts the 5S rRNA. Binds to the 5S rRNA independently of L5 and L18.

Functionally, this is one of the proteins that binds to the 5S RNA in the ribosome where it forms part of the central protuberance. The sequence is that of Large ribosomal subunit protein bL25 from Amoebophilus asiaticus (strain 5a2).